Here is a 125-residue protein sequence, read N- to C-terminus: Prepro-urotensin II-gamma (125 aa).

The N-terminal stretch at 1 to 21 is a signal peptide; sequence MMCNLLLSCSVLLLSCSHLLA. Positions 109–111 are excised as a propeptide; that stretch reads QFR. C119 and C124 are disulfide-bonded.

Belongs to the urotensin-2 family.

It is found in the secreted. Urotensin is found in the teleost caudal neurosecretory system. It has a suggested role in osmoregulation and as a corticotropin-releasing factor. The non-hormonal portion of this precursor may be a urotensin binding protein, urophysin. This is Prepro-urotensin II-gamma from Cyprinus carpio (Common carp).